A 296-amino-acid chain; its full sequence is L-isoleucine 3(1)-dioxygenase (296 aa).

Fe cation contacts are provided by H176, D178, and H267.

The protein belongs to the iron/ascorbate-dependent oxidoreductase family. L-ascorbate is required as a cofactor. The cofactor is Fe(2+).

It catalyses the reaction L-isoleucine + 2-oxoglutarate + O2 = 3(1)-hydroxy-L-isoleucine + succinate + CO2. Catalyzes the hydroxylation of L-isoleucine at the C-4' position to form L-4'-hydroxyisoleucine (4'-HIL). Exhibits low activity with L-valine and L-methionine. The polypeptide is L-isoleucine 3(1)-dioxygenase (Pantoea ananatis (strain AJ13355)).